Reading from the N-terminus, the 343-residue chain is MRN complex-interacting protein (343 aa).

The segment at 75-104 (EETVSASEEENVGHQQAGNVKQQEKSQPSE) is disordered. The segment covering 87 to 104 (GHQQAGNVKQQEKSQPSE) has biased composition (polar residues). 2 positions are modified to phosphoserine: S100 and S115. Disordered regions lie at residues 128-178 (SKQP…WGPQ), 193-212 (SPCL…RGPG), and 230-324 (AQFV…AQNP). A Nuclear localization signal (NLS) motif is present at residues 148–151 (RKRK). Residues 193 to 202 (SPCLQENSAD) show a composition bias toward polar residues. The necessary for the association with the MRN complex stretch occupies residues 213-237 (KELWSPIQQVTATSSKWAQFVLPPR). Residues 240–255 (SHVDSEQPRSLQRDPR) show a composition bias toward basic and acidic residues.

This sequence belongs to the MRNIP family. In terms of assembly, associates with the MRE11-RAD50-NBN (MRN) damage-sensing complex; this association is constitutive. Interacts with MRE11. Interacts with NBN. Interacts with RAD50. Post-translationally, phosphorylated; phosphorylation is constitutive and occurs in the absence of any DNA-damaging stimulus. Phosphorylation on Ser-115 is necessary for its nuclear retention.

It is found in the nucleus. The protein localises to the nucleoplasm. Functionally, plays a role in the cellular response to DNA damage and the maintenance of genome stability through its association with the MRN damage-sensing complex. Promotes chromatin loading and activity of the MRN complex to facilitate subsequent ATM-mediated DNA damage response signaling and DNA repair. This chain is MRN complex-interacting protein, found in Homo sapiens (Human).